A 220-amino-acid polypeptide reads, in one-letter code: Dual specificity protein phosphatase 19 (220 aa).

Residue methionine 1 is modified to N-acetylmethionine. Positions 64–205 constitute a Tyrosine-protein phosphatase domain; it reads QVGVIKPWLL…LRTYQVGKES (142 aa). Cysteine 149 serves as the catalytic Phosphocysteine intermediate.

Belongs to the protein-tyrosine phosphatase family. Non-receptor class dual specificity subfamily.

The enzyme catalyses O-phospho-L-tyrosyl-[protein] + H2O = L-tyrosyl-[protein] + phosphate. It catalyses the reaction O-phospho-L-seryl-[protein] + H2O = L-seryl-[protein] + phosphate. It carries out the reaction O-phospho-L-threonyl-[protein] + H2O = L-threonyl-[protein] + phosphate. With respect to regulation, phosphatase activity is enhanced by Ca(2+) and Mn(2+). Functionally, has a dual specificity toward Ser/Thr and Tyr-containing proteins. The protein is Dual specificity protein phosphatase 19 of Mus musculus (Mouse).